A 310-amino-acid polypeptide reads, in one-letter code: Cytosolic Fe-S cluster assembly factor Nubp1 homolog (310 aa).

[4Fe-4S] cluster-binding residues include Cys9, Cys23, Cys26, and Cys32. 63-70 (GKGGVGKS) contributes to the ATP binding site. Residues Cys240 and Cys243 each contribute to the [4Fe-4S] cluster site.

It belongs to the Mrp/NBP35 ATP-binding proteins family. NUBP1/NBP35 subfamily. As to quaternary structure, heterotetramer of 2 Nubp1 and 2 Nubp2 chains. [4Fe-4S] cluster is required as a cofactor.

The protein resides in the cytoplasm. Component of the cytosolic iron-sulfur (Fe/S) protein assembly (CIA) machinery. Required for maturation of extramitochondrial Fe-S proteins. The Nubp1-Nubp2 heterotetramer forms a Fe-S scaffold complex, mediating the de novo assembly of an Fe-S cluster and its transfer to target apoproteins. This chain is Cytosolic Fe-S cluster assembly factor Nubp1 homolog, found in Drosophila virilis (Fruit fly).